A 257-amino-acid chain; its full sequence is Exosome complex component mtr3 (257 aa).

Belongs to the RNase PH family. Component of the RNA exosome complex. Specifically part of the catalytically inactive RNA exosome core complex (Exo-9) may associate with the catalytic subunits rrp6 and dis3 in cytoplasmic- and nuclear-specific RNA exosome complex forms. Exo-9 is formed by a hexameric base ring of RNase PH domain-containing subunits and a cap ring consisting of csl4, rrp4 and rrp40.

The protein localises to the cytoplasm. It localises to the nucleus. The protein resides in the nucleolus. In terms of biological role, non-catalytic component of the RNA exosome complex which has 3'-&gt;5' exoribonuclease activity and participates in a multitude of cellular RNA processing and degradation events. In the nucleus, the RNA exosome complex is involved in proper maturation of stable RNA species such as rRNA, snRNA and snoRNA, in the elimination of RNA processing by-products and non-coding 'pervasive' transcripts, such as antisense RNA species and cryptic unstable transcripts (CUTs), and of mRNAs with processing defects, thereby limiting or excluding their export to the cytoplasm. In the cytoplasm, the RNA exosome complex is involved in general mRNA turnover and in RNA surveillance pathways, preventing translation of aberrant mRNAs. The catalytic inactive RNA exosome core complex of 9 subunits (Exo-9) is proposed to play a pivotal role in the binding and presentation of RNA for ribonucleolysis, and to serve as a scaffold for the association with catalytic subunits and accessory proteins or complexes. ski6 is part of the hexameric ring of RNase PH domain-containing subunits proposed to form a central channel which threads RNA substrates for degradation. This Schizosaccharomyces pombe (strain 972 / ATCC 24843) (Fission yeast) protein is Exosome complex component mtr3 (mtr3).